The following is a 685-amino-acid chain: Galactocerebrosidase (685 aa).

Residues 1 to 42 (MAEWLLSASWQRRAKAMTAAAGSAGRAAVPLLLCALLAPGGA) form the signal peptide. Thr109 is a binding site for substrate. Asn143 is a glycosylation site (N-linked (GlcNAc...) asparagine). 2 residues coordinate substrate: Trp151 and Asn197. Glu198 (proton donor/acceptor) is an active-site residue. Residue Glu274 is the Nucleophile of the active site. An intrachain disulfide couples Cys287 to Cys394. A glycan (N-linked (GlcNAc...) asparagine) is linked at Asn379. A substrate-binding site is contributed by Arg396. Residues Asn403, Asn556, Asn559, and Asn602 are each glycosylated (N-linked (GlcNAc...) asparagine).

The protein belongs to the glycosyl hydrolase 59 family. Detected in urine. Detected in testis, brain and placenta (at protein level). Detected in kidney and liver.

It localises to the lysosome. It catalyses the reaction a beta-D-galactosyl-(1&lt;-&gt;1')-N-acylsphing-4-enine + H2O = an N-acylsphing-4-enine + D-galactose. It carries out the reaction beta-D-galactosyl-(1&lt;-&gt;1)-sphing-4-enine + H2O = sphing-4-enine + D-galactose. The catalysed reaction is a D-galactosylceramide + H2O = an N-acyl-sphingoid base + D-galactose. Functionally, hydrolyzes the galactose ester bonds of glycolipids such as galactosylceramide and galactosylsphingosine. Enzyme with very low activity responsible for the lysosomal catabolism of galactosylceramide, a major lipid in myelin, kidney and epithelial cells of small intestine and colon. This Homo sapiens (Human) protein is Galactocerebrosidase.